A 28-amino-acid polypeptide reads, in one-letter code: Conotoxin Cl6a (28 aa).

Intrachain disulfides connect C3–C13, C7–C19, and C12–C24.

As to expression, expressed by the venom duct.

It localises to the secreted. The polypeptide is Conotoxin Cl6a (Californiconus californicus (California cone)).